The primary structure comprises 373 residues: Chaperone protein DnaJ (373 aa).

A J domain is found at 5–70; that stretch reads DFYATLGVAR…EKRAMYDQYG (66 aa). Residues 134-212 form a CR-type zinc finger; the sequence is GVKKRINIPT…CRGVGRNKAV (79 aa). Zn(2+) contacts are provided by cysteine 147, cysteine 150, cysteine 164, cysteine 167, cysteine 186, cysteine 189, cysteine 200, and cysteine 203. 4 CXXCXGXG motif repeats span residues 147–154, 164–171, 186–193, and 200–207; these read CDVCNGSG, CPTCKGSG, CPTCRGAG, and CVKCRGVG.

It belongs to the DnaJ family. Homodimer. Requires Zn(2+) as cofactor.

It localises to the cytoplasm. Functionally, participates actively in the response to hyperosmotic and heat shock by preventing the aggregation of stress-denatured proteins and by disaggregating proteins, also in an autonomous, DnaK-independent fashion. Unfolded proteins bind initially to DnaJ; upon interaction with the DnaJ-bound protein, DnaK hydrolyzes its bound ATP, resulting in the formation of a stable complex. GrpE releases ADP from DnaK; ATP binding to DnaK triggers the release of the substrate protein, thus completing the reaction cycle. Several rounds of ATP-dependent interactions between DnaJ, DnaK and GrpE are required for fully efficient folding. Also involved, together with DnaK and GrpE, in the DNA replication of plasmids through activation of initiation proteins. This chain is Chaperone protein DnaJ, found in Neisseria gonorrhoeae (strain ATCC 700825 / FA 1090).